Consider the following 209-residue polypeptide: Large ribosomal subunit protein uL3 (209 aa).

The protein belongs to the universal ribosomal protein uL3 family. In terms of assembly, part of the 50S ribosomal subunit. Forms a cluster with proteins L14 and L19.

One of the primary rRNA binding proteins, it binds directly near the 3'-end of the 23S rRNA, where it nucleates assembly of the 50S subunit. This is Large ribosomal subunit protein uL3 from Clostridium tetani (strain Massachusetts / E88).